We begin with the raw amino-acid sequence, 498 residues long: Glycerol kinase (498 aa).

T12 lines the ADP pocket. T12, T13, and S14 together coordinate ATP. Residue T12 coordinates sn-glycerol 3-phosphate. R16 is a binding site for ADP. Sn-glycerol 3-phosphate is bound by residues R82, E83, Y135, and D245. R82, E83, Y135, D245, and Q246 together coordinate glycerol. T267 and G310 together coordinate ADP. The ATP site is built by T267, G310, Q314, and G411. 2 residues coordinate ADP: G411 and N415.

It belongs to the FGGY kinase family. In terms of assembly, homotetramer and homodimer (in equilibrium).

The enzyme catalyses glycerol + ATP = sn-glycerol 3-phosphate + ADP + H(+). The protein operates within polyol metabolism; glycerol degradation via glycerol kinase pathway; sn-glycerol 3-phosphate from glycerol: step 1/1. Its activity is regulated as follows. Activated by phosphorylation and inhibited by fructose 1,6-bisphosphate (FBP). Functionally, key enzyme in the regulation of glycerol uptake and metabolism. Catalyzes the phosphorylation of glycerol to yield sn-glycerol 3-phosphate. This chain is Glycerol kinase, found in Clostridium botulinum (strain Eklund 17B / Type B).